The sequence spans 456 residues: Chromosomal replication initiator protein DnaA (456 aa).

The segment at 1–83 is domain I, interacts with DnaA modulators; that stretch reads MTASLWQQCL…LRFDIGNRPH (83 aa). The domain II stretch occupies residues 83-119; that stretch reads HPVAIARAPARGAAPVNNLQKSWESKADAKPEPNHKS. The interval 120-336 is domain III, AAA+ region; sequence NTNVNYTFEN…GALNRVIANA (217 aa). The ATP site is built by G164, G166, K167, and T168. The tract at residues 337 to 456 is domain IV, binds dsDNA; that stretch reads NFTGRAINID…YSNLIRTLSS (120 aa).

It belongs to the DnaA family. As to quaternary structure, oligomerizes as a right-handed, spiral filament on DNA at oriC.

The protein localises to the cytoplasm. Its function is as follows. Plays an essential role in the initiation and regulation of chromosomal replication. ATP-DnaA binds to the origin of replication (oriC) to initiate formation of the DNA replication initiation complex once per cell cycle. Binds the DnaA box (a 9 base pair repeat at the origin) and separates the double-stranded (ds)DNA. Forms a right-handed helical filament on oriC DNA; dsDNA binds to the exterior of the filament while single-stranded (ss)DNA is stabiized in the filament's interior. The ATP-DnaA-oriC complex binds and stabilizes one strand of the AT-rich DNA unwinding element (DUE), permitting loading of DNA polymerase. After initiation quickly degrades to an ADP-DnaA complex that is not apt for DNA replication. Binds acidic phospholipids. The sequence is that of Chromosomal replication initiator protein DnaA from Aeromonas salmonicida (strain A449).